Consider the following 346-residue polypeptide: Biotin synthase (346 aa).

Residues 38-256 enclose the Radical SAM core domain; sequence RQVQVSTLLS…IAVARIMMPT (219 aa). Residues C53, C57, and C60 each coordinate [4Fe-4S] cluster. [2Fe-2S] cluster-binding residues include C97, C128, C188, and R260.

Belongs to the radical SAM superfamily. Biotin synthase family. In terms of assembly, homodimer. [4Fe-4S] cluster is required as a cofactor. Requires [2Fe-2S] cluster as cofactor.

It carries out the reaction (4R,5S)-dethiobiotin + (sulfur carrier)-SH + 2 reduced [2Fe-2S]-[ferredoxin] + 2 S-adenosyl-L-methionine = (sulfur carrier)-H + biotin + 2 5'-deoxyadenosine + 2 L-methionine + 2 oxidized [2Fe-2S]-[ferredoxin]. Its pathway is cofactor biosynthesis; biotin biosynthesis; biotin from 7,8-diaminononanoate: step 2/2. Functionally, catalyzes the conversion of dethiobiotin (DTB) to biotin by the insertion of a sulfur atom into dethiobiotin via a radical-based mechanism. This is Biotin synthase from Shigella flexneri serotype 5b (strain 8401).